The following is a 198-amino-acid chain: Eukaryotic translation initiation factor isoform 4E (198 aa).

Residues 1 to 25 are disordered; that stretch reads MATDDVNEPLPAAAELPATEAEKQP. Alanine 2 is subject to N-acetylalanine. The span at 8–19 shows a compositional bias: low complexity; the sequence is EPLPAAAELPAT. MRNA contacts are provided by residues 46–47 and 92–93; these read WG and WE. Cysteines 97 and 138 form a disulfide. 145-152 is a binding site for mRNA; sequence RPQSKQDK.

It belongs to the eukaryotic initiation factor 4E family. EIF4F is a multi-subunit complex, the composition of which varies with external and internal environmental conditions. It is composed of at least EIF4A, EIF4E and EIF4G. EIF4E is also known to interact with other partners. In higher plants two isoforms of EIF4F have been identified, named isoform EIF4F and isoform EIF(iso)4F. Isoform EIF4F has subunits p220 and p26, whereas isoform EIF(iso)4F has subunits p82 and p28. This isoform interacts with the viral protein genome linked (VPg)-proteinase of turnip mosaic potyvirus. Interacts directly with LOX2. Interacts with BTF3. Post-translationally, according to the redox status, the Cys-97-Cys-138 disulfide bridge may have a role in regulating protein function by affecting its ability to bind capped mRNA. Abundant in floral organs and in young developing tissues.

Functionally, recognizes and binds the 7-methylguanosine-containing mRNA cap during an early step in the initiation of protein synthesis and facilitates ribosome binding by inducing the unwinding of the mRNAs secondary structures. Mediates susceptibility to Turnipmosaic potyvirus (TuMV) and Tobacco etch potyvirus (TEV). This chain is Eukaryotic translation initiation factor isoform 4E (EIF(ISO)4E), found in Arabidopsis thaliana (Mouse-ear cress).